Reading from the N-terminus, the 288-residue chain is 4-diphosphocytidyl-2-C-methyl-D-erythritol kinase (288 aa).

The active site involves K11. 100-110 (PIAAGLGSGSS) provides a ligand contact to ATP. Residue D140 is part of the active site.

The protein belongs to the GHMP kinase family. IspE subfamily.

The enzyme catalyses 4-CDP-2-C-methyl-D-erythritol + ATP = 4-CDP-2-C-methyl-D-erythritol 2-phosphate + ADP + H(+). Its pathway is isoprenoid biosynthesis; isopentenyl diphosphate biosynthesis via DXP pathway; isopentenyl diphosphate from 1-deoxy-D-xylulose 5-phosphate: step 3/6. Catalyzes the phosphorylation of the position 2 hydroxy group of 4-diphosphocytidyl-2C-methyl-D-erythritol. The protein is 4-diphosphocytidyl-2-C-methyl-D-erythritol kinase of Wolbachia pipientis wMel.